A 285-amino-acid polypeptide reads, in one-letter code: Phosphate import ATP-binding protein PstB (285 aa).

The region spanning 39 to 280 (LEVSDLQLWY…PAKKQTEDYI (242 aa)) is the ABC transporter domain. 71 to 78 (GPSGCGKS) lines the ATP pocket.

Belongs to the ABC transporter superfamily. Phosphate importer (TC 3.A.1.7) family. In terms of assembly, the complex is composed of two ATP-binding proteins (PstB), two transmembrane proteins (PstC and PstA) and a solute-binding protein (PstS).

Its subcellular location is the cell inner membrane. It catalyses the reaction phosphate(out) + ATP + H2O = ADP + 2 phosphate(in) + H(+). Functionally, part of the ABC transporter complex PstSACB involved in phosphate import. Responsible for energy coupling to the transport system. The sequence is that of Phosphate import ATP-binding protein PstB from Alkalilimnicola ehrlichii (strain ATCC BAA-1101 / DSM 17681 / MLHE-1).